Here is a 620-residue protein sequence, read N- to C-terminus: Cilia- and flagella-associated protein 52 (620 aa).

WD repeat units follow at residues 62-106, 109-150, 156-195, 203-242, 288-327, 330-369, 372-411, 415-454, 459-498, 500-539, 543-582, and 585-620; these read GHSN…LMAR, LHKG…AICG, LNVG…RKIW, QMKR…LADT, QLQG…ETLV, CHFE…ELLR, VPNM…LMYV, AHRI…QKLE, EHKS…RNQM, LANT…GIRE, SLSG…VTHV, and GHSG…PFPS.

This sequence belongs to the CFAP52 family. As to quaternary structure, microtubule inner protein component of sperm flagellar doublet microtubules. Interacts with BRCA2. Interacts with the CCT chaperonin complex. Interacts with HSP70. Interacts with AK8. Interacts with CFAP45. Interacts with DNAI1. Interacts with IQDC. Expressed in respiratory cells and sperm (at protein level).

The protein localises to the cytoplasm. It localises to the cytoskeleton. The protein resides in the cilium axoneme. Its subcellular location is the flagellum axoneme. Functionally, microtubule inner protein (MIP) part of the dynein-decorated doublet microtubules (DMTs) in cilia axoneme. Important for proper ciliary and flagellar beating. May act in cooperation with CFAP45 and axonemal dynein subunit DNAH11. May play a role in cell growth and/or survival. This is Cilia- and flagella-associated protein 52 (CFAP52) from Sus scrofa (Pig).